Reading from the N-terminus, the 106-residue chain is ATP-dependent Clp protease adapter protein ClpS (106 aa).

Belongs to the ClpS family. In terms of assembly, binds to the N-terminal domain of the chaperone ClpA.

Involved in the modulation of the specificity of the ClpAP-mediated ATP-dependent protein degradation. This Escherichia coli O139:H28 (strain E24377A / ETEC) protein is ATP-dependent Clp protease adapter protein ClpS.